Reading from the N-terminus, the 437-residue chain is UDP-N-acetylmuramate--L-alanine ligase (437 aa).

108-114 (GAHGKTS) contributes to the ATP binding site.

Belongs to the MurCDEF family.

It localises to the cytoplasm. It carries out the reaction UDP-N-acetyl-alpha-D-muramate + L-alanine + ATP = UDP-N-acetyl-alpha-D-muramoyl-L-alanine + ADP + phosphate + H(+). It participates in cell wall biogenesis; peptidoglycan biosynthesis. Cell wall formation. The sequence is that of UDP-N-acetylmuramate--L-alanine ligase from Staphylococcus aureus (strain MRSA252).